The sequence spans 339 residues: Phosphate acyltransferase (339 aa).

This sequence belongs to the PlsX family. In terms of assembly, homodimer. Probably interacts with PlsY.

The protein resides in the cytoplasm. The enzyme catalyses a fatty acyl-[ACP] + phosphate = an acyl phosphate + holo-[ACP]. Its pathway is lipid metabolism; phospholipid metabolism. In terms of biological role, catalyzes the reversible formation of acyl-phosphate (acyl-PO(4)) from acyl-[acyl-carrier-protein] (acyl-ACP). This enzyme utilizes acyl-ACP as fatty acyl donor, but not acyl-CoA. This Clostridium perfringens (strain SM101 / Type A) protein is Phosphate acyltransferase.